Consider the following 378-residue polypeptide: Protein RecA (378 aa).

A disordered region spans residues 1–20; the sequence is MAAKKDKSVPDSKITDKEGK. An ATP-binding site is contributed by 80–87; that stretch reads GAESSGKT. Residues 344–378 form a disordered region; sequence GPVDKKKKKSKKEASSDDTDDENLEIDDAIDENND. Residues 359–378 show a composition bias toward acidic residues; the sequence is SDDTDDENLEIDDAIDENND.

This sequence belongs to the RecA family.

The protein resides in the cytoplasm. Its function is as follows. Can catalyze the hydrolysis of ATP in the presence of single-stranded DNA, the ATP-dependent uptake of single-stranded DNA by duplex DNA, and the ATP-dependent hybridization of homologous single-stranded DNAs. It interacts with LexA causing its activation and leading to its autocatalytic cleavage. This Fusobacterium nucleatum subsp. nucleatum (strain ATCC 25586 / DSM 15643 / BCRC 10681 / CIP 101130 / JCM 8532 / KCTC 2640 / LMG 13131 / VPI 4355) protein is Protein RecA.